The sequence spans 148 residues: Large-conductance mechanosensitive channel (148 aa).

The next 2 helical transmembrane spans lie at 15–35 (LDMA…KSLV) and 84–104 (VGVF…VFLL).

This sequence belongs to the MscL family. In terms of assembly, homopentamer.

It localises to the cell inner membrane. Its function is as follows. Channel that opens in response to stretch forces in the membrane lipid bilayer. May participate in the regulation of osmotic pressure changes within the cell. The protein is Large-conductance mechanosensitive channel of Nitratidesulfovibrio vulgaris (strain DSM 19637 / Miyazaki F) (Desulfovibrio vulgaris).